Here is a 273-residue protein sequence, read N- to C-terminus: Proteasome subunit beta (273 aa).

Residues 1–19 are compositionally biased toward polar residues; that stretch reads MQESTANKVAANATSSFTE. Residues 1 to 23 are disordered; it reads MQESTANKVAANATSSFTEHLQR. Residues 1 to 50 constitute a propeptide, removed in mature form; by autocatalysis; sequence MQESTANKVAANATSSFTEHLQRDRPELLPFNRSGQGSATAAAPLQVPHA. The Nucleophile role is filled by T51.

This sequence belongs to the peptidase T1B family. In terms of assembly, the 20S proteasome core is composed of 14 alpha and 14 beta subunits that assemble into four stacked heptameric rings, resulting in a barrel-shaped structure. The two inner rings, each composed of seven catalytic beta subunits, are sandwiched by two outer rings, each composed of seven alpha subunits. The catalytic chamber with the active sites is on the inside of the barrel. Has a gated structure, the ends of the cylinder being occluded by the N-termini of the alpha-subunits. Is capped by the proteasome-associated ATPase, ARC.

The protein resides in the cytoplasm. It carries out the reaction Cleavage of peptide bonds with very broad specificity.. It functions in the pathway protein degradation; proteasomal Pup-dependent pathway. Its activity is regulated as follows. The formation of the proteasomal ATPase ARC-20S proteasome complex, likely via the docking of the C-termini of ARC into the intersubunit pockets in the alpha-rings, may trigger opening of the gate for substrate entry. Interconversion between the open-gate and close-gate conformations leads to a dynamic regulation of the 20S proteasome proteolysis activity. Its function is as follows. Component of the proteasome core, a large protease complex with broad specificity involved in protein degradation. This is Proteasome subunit beta from Pseudarthrobacter chlorophenolicus (strain ATCC 700700 / DSM 12829 / CIP 107037 / JCM 12360 / KCTC 9906 / NCIMB 13794 / A6) (Arthrobacter chlorophenolicus).